The sequence spans 264 residues: GTP cyclohydrolase FolE2 (264 aa).

Belongs to the GTP cyclohydrolase IV family.

It carries out the reaction GTP + H2O = 7,8-dihydroneopterin 3'-triphosphate + formate + H(+). The protein operates within cofactor biosynthesis; 7,8-dihydroneopterin triphosphate biosynthesis; 7,8-dihydroneopterin triphosphate from GTP: step 1/1. Its function is as follows. Converts GTP to 7,8-dihydroneopterin triphosphate. The chain is GTP cyclohydrolase FolE2 from Nitratidesulfovibrio vulgaris (strain ATCC 29579 / DSM 644 / CCUG 34227 / NCIMB 8303 / VKM B-1760 / Hildenborough) (Desulfovibrio vulgaris).